Here is a 277-residue protein sequence, read N- to C-terminus: Tryptophan synthase alpha chain (277 aa).

Catalysis depends on proton acceptor residues Glu50 and Asp61.

This sequence belongs to the TrpA family. Tetramer of two alpha and two beta chains.

The catalysed reaction is (1S,2R)-1-C-(indol-3-yl)glycerol 3-phosphate + L-serine = D-glyceraldehyde 3-phosphate + L-tryptophan + H2O. It participates in amino-acid biosynthesis; L-tryptophan biosynthesis; L-tryptophan from chorismate: step 5/5. In terms of biological role, the alpha subunit is responsible for the aldol cleavage of indoleglycerol phosphate to indole and glyceraldehyde 3-phosphate. The chain is Tryptophan synthase alpha chain from Beijerinckia indica subsp. indica (strain ATCC 9039 / DSM 1715 / NCIMB 8712).